A 262-amino-acid chain; its full sequence is Acyl-[acyl-carrier-protein]--UDP-N-acetylglucosamine O-acyltransferase (262 aa).

Belongs to the transferase hexapeptide repeat family. LpxA subfamily. In terms of assembly, homotrimer.

The protein localises to the cytoplasm. It carries out the reaction a (3R)-hydroxyacyl-[ACP] + UDP-N-acetyl-alpha-D-glucosamine = a UDP-3-O-[(3R)-3-hydroxyacyl]-N-acetyl-alpha-D-glucosamine + holo-[ACP]. The protein operates within glycolipid biosynthesis; lipid IV(A) biosynthesis; lipid IV(A) from (3R)-3-hydroxytetradecanoyl-[acyl-carrier-protein] and UDP-N-acetyl-alpha-D-glucosamine: step 1/6. Its function is as follows. Involved in the biosynthesis of lipid A, a phosphorylated glycolipid that anchors the lipopolysaccharide to the outer membrane of the cell. This chain is Acyl-[acyl-carrier-protein]--UDP-N-acetylglucosamine O-acyltransferase, found in Vibrio vulnificus (strain CMCP6).